The following is a 1560-amino-acid chain: Lysine-specific demethylase 5C (1560 aa).

Residues 14–55 (CPVFEPSWAEFRDPLGYIAKIRPIAEKSGICKIRPPADWQPP) form the JmjN domain. The 91-residue stretch at 79–169 (TRVKLNYLDQ…IVYPYEMYQS (91 aa)) folds into the ARID domain. Positions 197–207 (LRQSVQPSKFN) are enriched in polar residues. The disordered stretch occupies residues 197–227 (LRQSVQPSKFNSYGRRAKRLQPDPEPTEEDI). Residues lysine 205, lysine 229, lysine 244, and lysine 274 each participate in a glycyl lysine isopeptide (Lys-Gly) (interchain with G-Cter in SUMO2) cross-link. Serine 287 carries the phosphoserine modification. Residue lysine 295 forms a Glycyl lysine isopeptide (Lys-Gly) (interchain with G-Cter in SUMO2) linkage. Residues serine 301 and serine 317 each carry the phosphoserine modification. The segment at 326–372 (VCRMCSRGDEDDKLLLCDGCDDNYHIFCLLPPLPEIPKGVWRCPKCV) adopts a PHD-type 1 zinc-finger fold. Tyrosine 440 is a binding site for 2-oxoglutarate. Residues 468-634 (EYATSGWNLN…AGRQCIEHYR (167 aa)) enclose the JmjC domain. Fe cation is bound by residues histidine 514 and glutamate 516. 2-oxoglutarate-binding residues include serine 522, asparagine 524, and lysine 532. Histidine 602 contacts Fe cation. The C5HC2 zinc finger occupies 707 to 759 (CIKCKTTCFLSALACYDCPDGLVCLSHINDLCKCSSSRQYLRYRYTLDELPAM). Residues serine 893 and serine 897 each carry the phosphoserine modification. Residue lysine 1127 forms a Glycyl lysine isopeptide (Lys-Gly) (interchain with G-Cter in SUMO2) linkage. The segment at 1161-1181 (ILQLRRTNSAKPSPLASSSTA) is disordered. Residues 1169–1181 (SAKPSPLASSSTA) are compositionally biased toward low complexity. The segment at 1187-1248 (ICVCGQVLAG…DTKFLCPLCM (62 aa)) adopts a PHD-type 2 zinc-finger fold. 2 disordered regions span residues 1316-1371 (QAEP…GSGK) and 1444-1560 (ERHG…QQQL). The span at 1335–1345 (PLREGSGKDMP) shows a compositional bias: basic and acidic residues. Serine 1359 carries the phosphoserine modification. Residues 1448 to 1463 (SRARGRALERRRRRKV) are compositionally biased toward basic residues. The segment covering 1464-1481 (DRGGEGDDPAREELEPKR) has biased composition (basic and acidic residues). A compositionally biased stretch (acidic residues) spans 1488–1503 (EAEEVQEEEELEEETG). A compositionally biased stretch (polar residues) spans 1516–1544 (SPSTQENQNGLEPAEGTTSGPSAPFSTLT).

The protein belongs to the JARID1 histone demethylase family. In terms of assembly, part of two distinct complexes, one containing E2F6, and the other containing REST. Interacts with ZMYND8. Fe(2+) is required as a cofactor. As to expression, expressed in all tissues examined. Highest levels found in brain and skeletal muscle.

Its subcellular location is the nucleus. It catalyses the reaction N(6),N(6),N(6)-trimethyl-L-lysyl(4)-[histone H3] + 3 2-oxoglutarate + 3 O2 = L-lysyl(4)-[histone H3] + 3 formaldehyde + 3 succinate + 3 CO2. The inhibitor KDOAM-25 and others inhibit its demethylase activity, resulting to cell cycle arrest in myeloma cells. Its function is as follows. Histone demethylase that specifically demethylates 'Lys-4' of histone H3, thereby playing a central role in histone code. Does not demethylate histone H3 'Lys-9', H3 'Lys-27', H3 'Lys-36', H3 'Lys-79' or H4 'Lys-20'. Demethylates trimethylated and dimethylated but not monomethylated H3 'Lys-4'. Participates in transcriptional repression of neuronal genes by recruiting histone deacetylases and REST at neuron-restrictive silencer elements. Represses the CLOCK-BMAL1 heterodimer-mediated transcriptional activation of the core clock component PER2. The sequence is that of Lysine-specific demethylase 5C from Homo sapiens (Human).